The following is a 403-amino-acid chain: Acetylornithine aminotransferase (403 aa).

Pyridoxal 5'-phosphate-binding positions include G107–A108 and F140. A N(2)-acetyl-L-ornithine-binding site is contributed by R143. D225–Q228 provides a ligand contact to pyridoxal 5'-phosphate. Position 254 is an N6-(pyridoxal phosphate)lysine (K254). S282 contacts N(2)-acetyl-L-ornithine. T283 serves as a coordination point for pyridoxal 5'-phosphate.

Belongs to the class-III pyridoxal-phosphate-dependent aminotransferase family. ArgD subfamily. As to quaternary structure, homodimer. The cofactor is pyridoxal 5'-phosphate.

The protein resides in the cytoplasm. The catalysed reaction is N(2)-acetyl-L-ornithine + 2-oxoglutarate = N-acetyl-L-glutamate 5-semialdehyde + L-glutamate. It participates in amino-acid biosynthesis; L-arginine biosynthesis; N(2)-acetyl-L-ornithine from L-glutamate: step 4/4. In Vibrio vulnificus (strain YJ016), this protein is Acetylornithine aminotransferase.